The following is a 617-amino-acid chain: Protelomerase (617 aa).

DNA is bound by residues Arg270, Lys295, Arg376, and His409. Tyr418 functions as the Nucleophile in the catalytic mechanism. Residues 535 to 562 show a composition bias toward acidic residues; that stretch reads DAEEDEIEEDFTDEEIDDTEFDVSDNAS. Residues 535–575 are disordered; the sequence is DAEEDEIEEDFTDEEIDDTEFDVSDNASDEDKPEDKPRFAA. A compositionally biased stretch (basic and acidic residues) spans 563 to 575; it reads DEDKPEDKPRFAA.

Belongs to the Caudoviricetes Protelomerase family. In terms of assembly, monomer. Homodimer; in presence of DNA.

Its function is as follows. Converts the circular intermediates produced by the viral replication and carrying a joined telomere site to a linear DNA molecule with covalently closed hairpin ends. The viral circular DNA is cleaved at a palindromic site called telRL thereby generating a linear prophage plasmid with telomeres. Binds covalently to the 3'-phosphoryl of the cleaved strands. The chain is Protelomerase (tel) from Yersinia enterocolitica (Bacteriophage PY54).